The chain runs to 406 residues: MTLYRNLLLLASLGLSYAAPSKVQRAPDSSLHARAVCTPTAGGDSSTDDVPAITEALSSCGNGGTIVFPEGSTYYLNSVLDLGNCSNCDIQVEGLLKFASDTDYWSGRTAMISVSDVDGLKLRSLTGSGVIDGNGQDAWDLFASDSSYSRPTLLYITGGSNLEISGLRQKNPPNVFNSVKGGATNVVFSNLKMDANSKSDNPPKNTDGFDIGESTYVTITEVTVVNDDDCVALKPSSNYVTVDTISCTGSHGISVGSLGKSSDDSVKNIYVTGATMINSTKAAGIKTYPSGGDHGTSTVSNVTFTDFTVDNSDYAFQIQSCYGEDDDYCEENPGNAKLTDIVVSSFSGTTSDKYDPVVANIDCGSDGTCGISISGFDVKAPSGKSEVLCANTPSDLGVTCTSGASG.

The N-terminal stretch at 1 to 18 (MTLYRNLLLLASLGLSYA) is a signal peptide. A glycan (N-linked (GlcNAc...) asparagine) is linked at N84. 2 PbH1 repeats span residues 183–213 (ATNVVFSNLKMDANSKSDNPPKNTDGFDIGE) and 214–235 (STYVTITEVTVVNDDDCVALKP). D228 functions as the Proton donor in the catalytic mechanism. The active site involves H251. PbH1 repeat units follow at residues 266–289 (VKNIYVTGATMINSTKAAGIKTYP), 299–320 (VSNVTFTDFTVDNSDYAFQIQS), and 333–375 (PGNA…SISG). N-linked (GlcNAc...) asparagine glycosylation is found at N278 and N301.

Belongs to the glycosyl hydrolase 28 family.

It is found in the secreted. Pectinolytic enzyme involved in the degradation of xylogalacturonan (xga), a galacturonan backbone heavily substituted with xylose, and which is one important component of the hairy regions of pectin. Activity requires a galacturonic acid backbone substituted with xylose. This chain is Probable endo-xylogalacturonan hydrolase A (xghA), found in Aspergillus niger (strain ATCC MYA-4892 / CBS 513.88 / FGSC A1513).